Here is an 853-residue protein sequence, read N- to C-terminus: Aminotransferase PigE (853 aa).

Gly-503–Thr-504 is a binding site for pyridoxal 5'-phosphate. Lys-645 carries the N6-(pyridoxal phosphate)lysine modification. Thr-680 provides a ligand contact to pyridoxal 5'-phosphate.

The protein belongs to the class-III pyridoxal-phosphate-dependent aminotransferase family. In terms of assembly, homodimer. The cofactor is pyridoxal 5'-phosphate.

It functions in the pathway antibiotic biosynthesis; prodigiosin biosynthesis. Functionally, involved in the biosynthesis of 2-methyl-3-n-amyl-pyrrole (MAP), one of the terminal products involved in the biosynthesis of the red antibiotic prodigiosin (Pig). Catalyzes the transamination to the aldehyde group of 3-acetyloctanal, resulting in an aminoketone, which spontaneously cyclizes to yield the dihydro form of MAP (H2MAP). The polypeptide is Aminotransferase PigE (Serratia sp. (strain FS14)).